The primary structure comprises 275 residues: Formamidopyrimidine-DNA glycosylase (275 aa).

Pro2 functions as the Schiff-base intermediate with DNA in the catalytic mechanism. The active-site Proton donor is the Glu3. The active-site Proton donor; for beta-elimination activity is the Lys59. 3 residues coordinate DNA: His92, Arg111, and Arg155. The FPG-type zinc finger occupies 240–274; the sequence is NVYGRAGKACPKCGTTIEKQVLGQRSSYYCPQCQR. Arg264 functions as the Proton donor; for delta-elimination activity in the catalytic mechanism.

Belongs to the FPG family. Monomer. Zn(2+) is required as a cofactor.

The catalysed reaction is Hydrolysis of DNA containing ring-opened 7-methylguanine residues, releasing 2,6-diamino-4-hydroxy-5-(N-methyl)formamidopyrimidine.. It carries out the reaction 2'-deoxyribonucleotide-(2'-deoxyribose 5'-phosphate)-2'-deoxyribonucleotide-DNA = a 3'-end 2'-deoxyribonucleotide-(2,3-dehydro-2,3-deoxyribose 5'-phosphate)-DNA + a 5'-end 5'-phospho-2'-deoxyribonucleoside-DNA + H(+). Involved in base excision repair of DNA damaged by oxidation or by mutagenic agents. Acts as a DNA glycosylase that recognizes and removes damaged bases. Has a preference for oxidized purines, such as 7,8-dihydro-8-oxoguanine (8-oxoG). Has AP (apurinic/apyrimidinic) lyase activity and introduces nicks in the DNA strand. Cleaves the DNA backbone by beta-delta elimination to generate a single-strand break at the site of the removed base with both 3'- and 5'-phosphates. The polypeptide is Formamidopyrimidine-DNA glycosylase (Magnetococcus marinus (strain ATCC BAA-1437 / JCM 17883 / MC-1)).